A 310-amino-acid polypeptide reads, in one-letter code: Olfactory receptor 2A7 (310 aa).

Residues 1–24 (MGNNMTLITEFILLGFPLSPRMQM) lie on the Extracellular side of the membrane. Asparagine 4 carries N-linked (GlcNAc...) asparagine glycosylation. A helical transmembrane segment spans residues 25–45 (LLFALFSLFYAFTLLGNGTIV). Residues 46 to 53 (GLICLDSR) are Cytoplasmic-facing. A helical transmembrane segment spans residues 54 to 74 (LHTPMYFFLSHLAIVDIAYAC). Residues 75–96 (NTVPQMLVNLLDPVKPISYAGC) are Extracellular-facing. Cysteines 96 and 178 form a disulfide. The chain crosses the membrane as a helical span at residues 97–117 (MTQTFLFLTFAITECLLLVVM). Residues 118 to 148 (SYDRYVAICHPLRYSAIMSWRVCSTMAVTSW) lie on the Cytoplasmic side of the membrane. A helical transmembrane segment spans residues 149–169 (IIGVLLSLIHLVLLLPLPFCV). Residues 170–204 (SQKVNHFFCEITAILKLACADTHLNETMVLAGAVS) lie on the Extracellular side of the membrane. Asparagine 194 is a glycosylation site (N-linked (GlcNAc...) asparagine). Residues 205-225 (VLVGPFSSIVVSYACILGAIL) form a helical membrane-spanning segment. Residues 226 to 239 (KIQSEEGQRKAFST) are Cytoplasmic-facing. The helical transmembrane segment at 240–260 (CSSHLCVVGLFYGTAIVMYVG) threads the bilayer. Residues 261–273 (PRHGSPKEQKKYL) are Extracellular-facing. Residues 274–291 (LLFHSLFNPMLNPLIYSL) form a helical membrane-spanning segment. Over 292 to 310 (RNSDVKNTLKRVLRTQRAL) the chain is Cytoplasmic.

Belongs to the G-protein coupled receptor 1 family. In terms of tissue distribution, olfactory epithelium.

Its subcellular location is the cell membrane. Odorant receptor. This Mus musculus (Mouse) protein is Olfactory receptor 2A7.